A 333-amino-acid polypeptide reads, in one-letter code: Transaldolase (333 aa).

Residue lysine 135 is the Schiff-base intermediate with substrate of the active site.

It belongs to the transaldolase family. Type 1 subfamily. Homodimer.

The protein localises to the cytoplasm. It catalyses the reaction D-sedoheptulose 7-phosphate + D-glyceraldehyde 3-phosphate = D-erythrose 4-phosphate + beta-D-fructose 6-phosphate. It participates in carbohydrate degradation; pentose phosphate pathway; D-glyceraldehyde 3-phosphate and beta-D-fructose 6-phosphate from D-ribose 5-phosphate and D-xylulose 5-phosphate (non-oxidative stage): step 2/3. In terms of biological role, transaldolase is important for the balance of metabolites in the pentose-phosphate pathway. The protein is Transaldolase of Prochlorococcus marinus subsp. pastoris (strain CCMP1986 / NIES-2087 / MED4).